The sequence spans 84 residues: Small ribosomal subunit protein bS16 (84 aa).

It belongs to the bacterial ribosomal protein bS16 family.

This chain is Small ribosomal subunit protein bS16, found in Dichelobacter nodosus (strain VCS1703A).